A 169-amino-acid polypeptide reads, in one-letter code: Ribosome maturation factor RimM (169 aa).

The PRC barrel domain maps to 97–169; the sequence is EDEVYFKDLI…KIVVDWEYDY (73 aa).

It belongs to the RimM family. In terms of assembly, binds ribosomal protein uS19.

The protein resides in the cytoplasm. Functionally, an accessory protein needed during the final step in the assembly of 30S ribosomal subunit, possibly for assembly of the head region. Essential for efficient processing of 16S rRNA. May be needed both before and after RbfA during the maturation of 16S rRNA. It has affinity for free ribosomal 30S subunits but not for 70S ribosomes. The protein is Ribosome maturation factor RimM of Francisella tularensis subsp. tularensis (strain FSC 198).